A 543-amino-acid chain; its full sequence is CTP synthase (543 aa).

Residues 1-265 (MTRYIFVTGG…DDFVVERFGL (265 aa)) form an amidoligase domain region. Residue S13 coordinates CTP. Residue S13 coordinates UTP. Residues 14 to 19 (SLGKGI) and D71 each bind ATP. Mg(2+) is bound by residues D71 and E139. Residues 146 to 148 (DIE), 186 to 191 (KTKPTQ), and K222 contribute to the CTP site. Residues 186–191 (KTKPTQ) and K222 each bind UTP. Residues 290–541 (TIAMVGKYME…VKAALAQHQK (252 aa)) enclose the Glutamine amidotransferase type-1 domain. Position 351 (G351) interacts with L-glutamine. The active-site Nucleophile; for glutamine hydrolysis is the C378. L-glutamine is bound by residues 379–382 (LGMQ), E402, and R469. Residues H514 and E516 contribute to the active site.

The protein belongs to the CTP synthase family. As to quaternary structure, homotetramer.

The enzyme catalyses UTP + L-glutamine + ATP + H2O = CTP + L-glutamate + ADP + phosphate + 2 H(+). It catalyses the reaction L-glutamine + H2O = L-glutamate + NH4(+). It carries out the reaction UTP + NH4(+) + ATP = CTP + ADP + phosphate + 2 H(+). It participates in pyrimidine metabolism; CTP biosynthesis via de novo pathway; CTP from UDP: step 2/2. Allosterically activated by GTP, when glutamine is the substrate; GTP has no effect on the reaction when ammonia is the substrate. The allosteric effector GTP functions by stabilizing the protein conformation that binds the tetrahedral intermediate(s) formed during glutamine hydrolysis. Inhibited by the product CTP, via allosteric rather than competitive inhibition. Catalyzes the ATP-dependent amination of UTP to CTP with either L-glutamine or ammonia as the source of nitrogen. Regulates intracellular CTP levels through interactions with the four ribonucleotide triphosphates. The sequence is that of CTP synthase from Pseudomonas savastanoi pv. phaseolicola (strain 1448A / Race 6) (Pseudomonas syringae pv. phaseolicola (strain 1448A / Race 6)).